Consider the following 687-residue polypeptide: Outer dynein arm-docking complex subunit 1 (687 aa).

Coiled-coil stretches lie at residues 100–193 (QVRV…YLNV), 222–267 (REEA…LKLK), and 341–421 (INEQ…LFTR). The segment at 126-147 (SRNSAHSKNARSPGCVQHDKVK) is disordered. Disordered stretches follow at residues 363-388 (VSGR…QRVD), 487-511 (FPKK…AKDD), and 540-687 (ESTP…QSNY). The span at 366–388 (RRSEEDRRAQQEQQRAELQQRVD) shows a compositional bias: basic and acidic residues. The span at 544–556 (SMTSSTQKVSSSS) shows a compositional bias: low complexity. Composition is skewed to polar residues over residues 557 to 611 (RLVT…SSRG) and 620 to 629 (RSPNSSSYLG). Low complexity predominate over residues 660 to 680 (SPGPASSPGPASSTGQASSTS).

This sequence belongs to the ODA1/DCC2 family. As to quaternary structure, component of the outer dynein arm-docking complex along with ODAD2, ODAD3, ODAD4 and CLXN. Interacts with ODAD3. Interacts with ODAD4; this interaction may facilitate the recruitment and/or attachment of outer dynein arm docking complex proteins, including ODAD1, ODAD3, and ODAD4 to ciliary axonemes. Interacts with DNAH9. Interacts with MNS1. Interacts with PIERCE1 and PIERCE2; the interactions link the outer dynein arms docking complex (ODA-DC) to the internal microtubule inner proteins (MIP) in cilium axoneme. In terms of tissue distribution, expressed in trachea multiciliated cells.

It is found in the cytoplasm. It localises to the cytoskeleton. Its subcellular location is the cilium axoneme. Component of the outer dynein arm-docking complex (ODA-DC) that mediates outer dynein arms (ODA) binding onto the doublet microtubule. Involved in mediating assembly of both ODAs and their axonemal docking complex onto ciliary microtubules. This Bos taurus (Bovine) protein is Outer dynein arm-docking complex subunit 1 (ODAD1).